A 220-amino-acid polypeptide reads, in one-letter code: Uracil-DNA glycosylase (220 aa).

Asp65 (proton acceptor) is an active-site residue.

It belongs to the uracil-DNA glycosylase (UDG) superfamily. UNG family.

The protein resides in the cytoplasm. The enzyme catalyses Hydrolyzes single-stranded DNA or mismatched double-stranded DNA and polynucleotides, releasing free uracil.. In terms of biological role, excises uracil residues from the DNA which can arise as a result of misincorporation of dUMP residues by DNA polymerase or due to deamination of cytosine. This chain is Uracil-DNA glycosylase, found in Amoebophilus asiaticus (strain 5a2).